We begin with the raw amino-acid sequence, 306 residues long: Proline-rich transmembrane protein 1 (306 aa).

Residues M1–Q142 are disordered. The Cytoplasmic portion of the chain corresponds to M1–Y223. Residues T15 to A36 show a composition bias toward pro residues. The span at S40 to H49 shows a compositional bias: basic residues. 2 stretches are compositionally biased toward pro residues: residues H87 to P111 and P121 to P137. The chain crosses the membrane as a helical span at residues M224–F244. Over K245–S275 the chain is Extracellular. An intramembrane region (helical) is located at residues L276–A296. At A297–P306 the chain is on the extracellular side.

Belongs to the CD225/Dispanin family. As to quaternary structure, component of the outer core of AMPAR complex. AMPAR complex consists of an inner core made of 4 pore-forming GluA/GRIA proteins (GRIA1, GRIA2, GRIA3 and GRIA4) and 4 major auxiliary subunits arranged in a twofold symmetry. One of the two pairs of distinct binding sites is occupied either by CNIH2, CNIH3 or CACNG2, CACNG3. The other harbors CACNG2, CACNG3, CACNG4, CACNG8 or GSG1L. This inner core of AMPAR complex is complemented by outer core constituents binding directly to the GluA/GRIA proteins at sites distinct from the interaction sites of the inner core constituents. Outer core constituents include at least PRRT1, PRRT2, CKAMP44/SHISA9, FRRS1L and NRN1. The proteins of the inner and outer core serve as a platform for other, more peripherally associated AMPAR constituents. Alone or in combination, these auxiliary subunits control the gating and pharmacology of the AMPAR complex and profoundly impact their biogenesis and protein processing.

The protein localises to the cell membrane. The protein resides in the synapse. Required to maintain a pool of extrasynaptic AMPA-regulated glutamate receptors (AMPAR) which is necessary for synapse development and function. Regulates basal AMPAR function and synaptic transmission during development but is dispensable at mature hippocampal synapses. Plays a role in regulating basal phosphorylation levels of glutamate receptor GRIA1 and promotes GRIA1 and GRIA2 cell surface expression. The polypeptide is Proline-rich transmembrane protein 1 (Homo sapiens (Human)).